A 146-amino-acid chain; its full sequence is Large ribosomal subunit protein uL23B (146 aa).

Positions Met-1–Ser-22 are disordered.

The protein belongs to the universal ribosomal protein uL23 family.

This protein binds to a specific region on the 26S rRNA. The chain is Large ribosomal subunit protein uL23B (rpl-23A.2) from Caenorhabditis elegans.